The following is a 256-amino-acid chain: Small ribosomal subunit protein eS1 (256 aa).

The segment covering 1–18 (MAVGKNKRLSKGKKGLKK) has biased composition (basic residues). The tract at residues 1–20 (MAVGKNKRLSKGKKGLKKRT) is disordered. Ala-2 bears the N-acetylalanine; partial mark.

It belongs to the eukaryotic ribosomal protein eS1 family. Component of the small ribosomal subunit. Mature ribosomes consist of a small (40S) and a large (60S) subunit. The 40S subunit contains about 33 different proteins and 1 molecule of RNA (18S). The 60S subunit contains about 49 different proteins and 3 molecules of RNA (25S, 5.8S and 5S).

Its subcellular location is the cytoplasm. This Talaromyces marneffei (strain ATCC 18224 / CBS 334.59 / QM 7333) (Penicillium marneffei) protein is Small ribosomal subunit protein eS1 (rps1).